Here is a 204-residue protein sequence, read N- to C-terminus: Transmembrane protein 186 (204 aa).

Residues Met-1–Lys-69 lie on the Mitochondrial matrix side of the membrane. A helical membrane pass occupies residues Val-70 to Gly-90. Topologically, residues Gln-91 to Asp-95 are mitochondrial intermembrane. Residues Ala-96–Tyr-116 form a helical membrane-spanning segment. Topologically, residues Ala-117 to Asn-204 are mitochondrial matrix.

The protein belongs to the TMEM186 family. In terms of assembly, associates with mitochondrial complex I assembly intermediates during its biogenesis.

The protein resides in the mitochondrion inner membrane. As part of the MCIA complex, required for efficient assembly of the mitochondrial complex I. The protein is Transmembrane protein 186 of Drosophila melanogaster (Fruit fly).